A 664-amino-acid polypeptide reads, in one-letter code: Xyloglucan-specific galacturonosyltransferase 1 (664 aa).

The segment covering 1–21 has biased composition (basic residues); that stretch reads MSLSKHLQKLVHKRESKKQPN. The disordered stretch occupies residues 1 to 49; it reads MSLSKHLQKLVHKRESKKQPNKKMPVSVSKLRRPRTSKKTETGNPEKTL. Residues 1 to 71 are Cytoplasmic-facing; that stretch reads MSLSKHLQKL…IFSARSFLYR (71 aa). Residues 72-92 traverse the membrane as a helical; Signal-anchor for type II membrane protein segment; that stretch reads VPLTILFLFLIYLWSTSTTVI. Topologically, residues 93 to 664 are lumenal; the sequence is SGNVVHICIS…SLFKKIAKTV (572 aa). N-linked (GlcNAc...) asparagine glycans are attached at residues Asn126, Asn158, Asn175, Asn181, Asn355, Asn379, and Asn522.

This sequence belongs to the glycosyltransferase 47 family. Root hair specific. Expressed in roots and young leaves.

Its subcellular location is the golgi apparatus membrane. Functionally, xyloglucan-specific galacturonosyltransferase that forms the beta-D-galactosyluronic acid-(1-&gt;2)-alpha-D-xylosyl linkage. Required for root hair development probably by providing important acidic xyloglucans. The chain is Xyloglucan-specific galacturonosyltransferase 1 from Arabidopsis thaliana (Mouse-ear cress).